A 459-amino-acid polypeptide reads, in one-letter code: Acetyltransferase pigO (459 aa).

Belongs to the trichothecene O-acetyltransferase family.

The protein operates within secondary metabolite biosynthesis. In terms of biological role, acetyltransferase; part of the gene cluster that mediates the biosynthesis of azaphilone pigments (MonAzPs), a complex mixture of compounds with a common azaphilone skeleton very widely used as food colorants. PigM and pigO are involved in the elimination of the omega-1 alcohol with pigM acting as an O-acetyltransferase that synthesizes the O-11 acetyl intermediate whereas pigO eliminates acetic acid to yield an intermediate with a C10(11) double bond. The first step of the pathway is performed by the nrPKS pigA that forms the hexaketide precursor from successive condensations of five malonyl-CoA units, with a simple acetyl-CoA starter unit. The role of esterase pigG is not clear, but it may play at most a supplementary role in the formation of the benzaldehyde produced by the pigA nrPKS. This very reactive benzaldehyde is intercepted by the pigC ketoreductase that to provide the first stable enzyme-free MonAzPs intermediate, 6-(4-hydroxy-2-oxopentyl)-3-methyl-2,4-dioxocyclohexane carbaldehyde, also known as M7PKS-1. The FAD-dependent monooxygenase pigN hydroxylates M7PKS-1 at C-4, which triggers the formation of the pyran ring. PigJ, pigK and pigD are involved in the acetylation of the pyran ring. PigJ and pigK form the two subunits of a dedicated fungal FAS that produces the side chain fatty acyl moiety of MonAzPs and pigD transfers the fatty acyl chain to the C-4 alcohol. PigM and pigO are involved in the elimination of the omega-1 alcohol. PigM acts as an O-acetyltransferase that synthesizes the putative O-11 acetyl intermediate whereas pigO eliminates acetic acid to yield an intermediate with a C10(11) double bond. The dehydration of the C-11 alcohol followed by the reduction of the C6(7) double bond by the NAD(P)H-dependent oxidoreductase pigE increases the electrophilicity of the C-5 ketone of the resulting acyl benzopyran. This in turn sets up the C-5 ketone for an intramolecular Knoevenagel aldol condensation with the C-20 enol of the side chain. This condensation affords the characteristic linear tricyclic carbon skeletons of the yellow pigments that serve as the common precursors for the classical yellow pigments monascin and ankaflavin, orange pigments rubopunctatin and monascorubrin, and red pigments ribropunctamine and monascorubramine. The FAD-dependent oxidoreductase pigF is especially invoved in the biosynthesis of orange and red pigments via desaturation of C6(7). This is Acetyltransferase pigO from Monascus ruber (Mold).